Consider the following 204-residue polypeptide: Protein-L-isoaspartate O-methyltransferase (204 aa).

The protein belongs to the methyltransferase superfamily. L-isoaspartyl/D-aspartyl protein methyltransferase family. In terms of assembly, monomer.

The protein resides in the cytoplasm. The catalysed reaction is [protein]-L-isoaspartate + S-adenosyl-L-methionine = [protein]-L-isoaspartate alpha-methyl ester + S-adenosyl-L-homocysteine. Its function is as follows. Catalyzes the methyl esterification of L-isoaspartyl residues in peptides and proteins that result from spontaneous decomposition of normal L-aspartyl and L-asparaginyl residues. It plays a role in the repair and/or degradation of damaged proteins. The polypeptide is Protein-L-isoaspartate O-methyltransferase (pcm) (Rhizobium meliloti (strain 1021) (Ensifer meliloti)).